The sequence spans 138 residues: Large-conductance mechanosensitive channel (138 aa).

The next 3 membrane-spanning stretches (helical) occupy residues 19 to 39 (VGVIIGGAFGAIVTSLVGDII), 40 to 60 (MPIIGAITGGLDFSNYFIPLA), and 81 to 101 (GSFLTLTLNFFIVAFVLFMVI).

The protein belongs to the MscL family. In terms of assembly, homopentamer.

The protein resides in the cell inner membrane. Functionally, channel that opens in response to stretch forces in the membrane lipid bilayer. May participate in the regulation of osmotic pressure changes within the cell. The chain is Large-conductance mechanosensitive channel from Bradyrhizobium sp. (strain ORS 278).